A 261-amino-acid polypeptide reads, in one-letter code: Cytochrome c oxidase subunit 3 (261 aa).

The Mitochondrial matrix portion of the chain corresponds to Thr-2–Pro-15. Residues Trp-16–Trp-34 traverse the membrane as a helical segment. At Phe-35–Thr-40 the chain is on the mitochondrial intermembrane side. The helical transmembrane segment at Ile-41–Thr-66 threads the bilayer. The Mitochondrial matrix segment spans residues Tyr-67–Thr-72. A helical transmembrane segment spans residues Pro-73–Ser-105. The Mitochondrial intermembrane portion of the chain corresponds to Leu-106–Glu-128. A helical membrane pass occupies residues Val-129–Met-152. Over Glu-153 to Asn-155 the chain is Mitochondrial matrix. The helical transmembrane segment at Arg-156–Glu-183 threads the bilayer. Residues Thr-184–Asp-190 are Mitochondrial intermembrane-facing. The helical transmembrane segment at Gly-191 to Leu-223 threads the bilayer. The Mitochondrial matrix segment spans residues Lys-224–His-232. Residues Phe-233 to Ile-256 traverse the membrane as a helical segment. At Tyr-257–Ser-261 the chain is on the mitochondrial intermembrane side.

Belongs to the cytochrome c oxidase subunit 3 family. As to quaternary structure, component of the cytochrome c oxidase (complex IV, CIV), a multisubunit enzyme composed of 14 subunits. The complex is composed of a catalytic core of 3 subunits MT-CO1, MT-CO2 and MT-CO3, encoded in the mitochondrial DNA, and 11 supernumerary subunits COX4I, COX5A, COX5B, COX6A, COX6B, COX6C, COX7A, COX7B, COX7C, COX8 and NDUFA4, which are encoded in the nuclear genome. The complex exists as a monomer or a dimer and forms supercomplexes (SCs) in the inner mitochondrial membrane with NADH-ubiquinone oxidoreductase (complex I, CI) and ubiquinol-cytochrome c oxidoreductase (cytochrome b-c1 complex, complex III, CIII), resulting in different assemblies (supercomplex SCI(1)III(2)IV(1) and megacomplex MCI(2)III(2)IV(2)).

It localises to the mitochondrion inner membrane. The enzyme catalyses 4 Fe(II)-[cytochrome c] + O2 + 8 H(+)(in) = 4 Fe(III)-[cytochrome c] + 2 H2O + 4 H(+)(out). Its function is as follows. Component of the cytochrome c oxidase, the last enzyme in the mitochondrial electron transport chain which drives oxidative phosphorylation. The respiratory chain contains 3 multisubunit complexes succinate dehydrogenase (complex II, CII), ubiquinol-cytochrome c oxidoreductase (cytochrome b-c1 complex, complex III, CIII) and cytochrome c oxidase (complex IV, CIV), that cooperate to transfer electrons derived from NADH and succinate to molecular oxygen, creating an electrochemical gradient over the inner membrane that drives transmembrane transport and the ATP synthase. Cytochrome c oxidase is the component of the respiratory chain that catalyzes the reduction of oxygen to water. Electrons originating from reduced cytochrome c in the intermembrane space (IMS) are transferred via the dinuclear copper A center (CU(A)) of subunit 2 and heme A of subunit 1 to the active site in subunit 1, a binuclear center (BNC) formed by heme A3 and copper B (CU(B)). The BNC reduces molecular oxygen to 2 water molecules using 4 electrons from cytochrome c in the IMS and 4 protons from the mitochondrial matrix. This is Cytochrome c oxidase subunit 3 from Rattus norvegicus (Rat).